A 439-amino-acid chain; its full sequence is C4-dicarboxylate transport protein 1 (439 aa).

A run of 6 helical transmembrane segments spans residues 18-38 (VLYI…WLWP), 56-76 (LIKM…IAHV), 91-111 (IYFE…ANVI), 157-177 (GEIL…MSLG), 193-213 (AIFG…FGAM), and 231-251 (LIAT…GIIA).

It belongs to the dicarboxylate/amino acid:cation symporter (DAACS) (TC 2.A.23) family.

The protein resides in the cell inner membrane. Functionally, responsible for the transport of dicarboxylates such as succinate, fumarate, and malate from the periplasm across the membrane. This Bradyrhizobium sp. (strain ORS 278) protein is C4-dicarboxylate transport protein 1.